The primary structure comprises 193 residues: MQLLEERILTDGNILGENILKVDNFLTHQVDYRLMKAIGKVFAQKYAEAGITKVVTIEASGIAPAVYAAEAMDVPMIFAKKHKNITMTEGILTAEVYSFTKQVTSTVSIAGKFLSKEDKVLIIDDFLANGQAAKGLIEIIGQAGAQVVGVGIVIEKSFQDGRRLIEDMGIEVTSLARIKNFENGNLNFLEADA.

2 residues coordinate xanthine: Leu20 and Thr27. 128–132 (ANGQA) is a binding site for 5-phospho-alpha-D-ribose 1-diphosphate. Lys156 provides a ligand contact to xanthine.

This sequence belongs to the purine/pyrimidine phosphoribosyltransferase family. Xpt subfamily. In terms of assembly, homodimer.

The protein resides in the cytoplasm. It carries out the reaction XMP + diphosphate = xanthine + 5-phospho-alpha-D-ribose 1-diphosphate. Its pathway is purine metabolism; XMP biosynthesis via salvage pathway; XMP from xanthine: step 1/1. In terms of biological role, converts the preformed base xanthine, a product of nucleic acid breakdown, to xanthosine 5'-monophosphate (XMP), so it can be reused for RNA or DNA synthesis. This chain is Xanthine phosphoribosyltransferase, found in Streptococcus pyogenes serotype M3 (strain ATCC BAA-595 / MGAS315).